A 331-amino-acid polypeptide reads, in one-letter code: Glucokinase (331 aa).

16–21 (GDIGGT) provides a ligand contact to ATP.

It belongs to the bacterial glucokinase family.

It is found in the cytoplasm. It carries out the reaction D-glucose + ATP = D-glucose 6-phosphate + ADP + H(+). The chain is Glucokinase from Pseudomonas aeruginosa (strain UCBPP-PA14).